The following is a 196-amino-acid chain: DnaA initiator-associating protein DiaA (196 aa).

Positions 34 to 196 (LVQSLLNGNK…DNTLFPHQDD (163 aa)) constitute an SIS domain.

Belongs to the SIS family. DiaA subfamily. As to quaternary structure, homotetramer; dimer of dimers.

Required for the timely initiation of chromosomal replication via direct interactions with the DnaA initiator protein. The chain is DnaA initiator-associating protein DiaA from Yersinia pseudotuberculosis serotype O:1b (strain IP 31758).